A 328-amino-acid chain; its full sequence is Protein phosphatase 1 regulatory inhibitor subunit PPP1R7 homolog (328 aa).

13 LRR repeats span residues Ile-13–Pro-36, Pro-37–Leu-59, Thr-61–His-82, Leu-86–Lys-110, Leu-111–Ala-130, Ser-131–Leu-153, His-154–Lys-177, Glu-179–Leu-196, Lys-197–Leu-221, Glu-223–Leu-240, Val-241–Lys-264, Glu-266–Gly-287, and Lys-289–Val-312.

In terms of assembly, interacts with human protein phosphatase PPP1C.

In terms of biological role, inhibitor of protein-phosphatase 1 (PP1). Binds to and inhibits PP1 activity. This chain is Protein phosphatase 1 regulatory inhibitor subunit PPP1R7 homolog, found in Arabidopsis thaliana (Mouse-ear cress).